Reading from the N-terminus, the 542-residue chain is Peptide chain release factor 3 (542 aa).

A tr-type G domain is found at E11–R279. GTP is bound by residues S20–T27, D88–H92, and N142–D145.

This sequence belongs to the TRAFAC class translation factor GTPase superfamily. Classic translation factor GTPase family. PrfC subfamily.

It is found in the cytoplasm. Functionally, increases the formation of ribosomal termination complexes and stimulates activities of RF-1 and RF-2. It binds guanine nucleotides and has strong preference for UGA stop codons. It may interact directly with the ribosome. The stimulation of RF-1 and RF-2 is significantly reduced by GTP and GDP, but not by GMP. The protein is Peptide chain release factor 3 of Nitrosococcus oceani (strain ATCC 19707 / BCRC 17464 / JCM 30415 / NCIMB 11848 / C-107).